The sequence spans 155 residues: Small ribosomal subunit protein uS7c (155 aa).

Belongs to the universal ribosomal protein uS7 family. Part of the 30S ribosomal subunit.

It is found in the plastid. Its subcellular location is the chloroplast. One of the primary rRNA binding proteins, it binds directly to 16S rRNA where it nucleates assembly of the head domain of the 30S subunit. The sequence is that of Small ribosomal subunit protein uS7c (rps7) from Spathiphyllum wallisii (Peace lily).